The following is a 69-amino-acid chain: Putative membrane protein insertion efficiency factor (69 aa).

This sequence belongs to the UPF0161 family.

Its subcellular location is the cell membrane. In terms of biological role, could be involved in insertion of integral membrane proteins into the membrane. The sequence is that of Putative membrane protein insertion efficiency factor from Clostridium botulinum (strain Kyoto / Type A2).